A 1861-amino-acid chain; its full sequence is Amylopullulanase (1861 aa).

Residues 1–35 form the signal peptide; the sequence is MNKKLFTNRFISFNMSLLLVLTAVFSSIPLHSVHA. Residues D248, N250, D288, D343, N401, D403, N406, D407, and D453 each contribute to the Ca(2+) site. Substrate is bound by residues H526 and R626. D628 serves as the catalytic Nucleophile. Catalysis depends on E657, which acts as the Proton donor. Residues 733 to 734, D793, and R797 each bind substrate; that span reads HD. Fibronectin type-III domains lie at 929 to 1021 and 1158 to 1252; these read APQA…AYPI and KPTA…VVPI. The 109-residue stretch at 1246 to 1354 folds into the CBM20 domain; the sequence is KPDVVPIKVI…INDTVYRWRD (109 aa). Positions 1448–1486 are disordered; it reads QENNSGSGTGNNNTSTSGSNSSSTGSGSTGSTSITSNIS. Low complexity predominate over residues 1450-1486; the sequence is NNSGSGTGNNNTSTSGSNSSSTGSGSTGSTSITSNIS. SLH domains are found at residues 1677–1740, 1741–1799, and 1802–1861; these read EYDK…YSGE, FSDV…KEEN, and ATTF…SGNI.

This sequence belongs to the glycosyl hydrolase 13 family. Ca(2+) is required as a cofactor. Glycosylated.

It is found in the secreted. The protein localises to the cell wall. It carries out the reaction Endohydrolysis of (1-&gt;4)-alpha-D-glucosidic linkages in polysaccharides containing three or more (1-&gt;4)-alpha-linked D-glucose units.. It catalyses the reaction Hydrolysis of (1-&gt;6)-alpha-D-glucosidic linkages in pullulan, amylopectin and glycogen, and in the alpha- and beta-limit dextrins of amylopectin and glycogen.. This chain is Amylopullulanase (amyB), found in Thermoanaerobacterium thermosulfurigenes (Clostridium thermosulfurogenes).